A 500-amino-acid chain; its full sequence is Lysine--tRNA ligase (500 aa).

Residues glutamate 411 and glutamate 418 each coordinate Mg(2+).

This sequence belongs to the class-II aminoacyl-tRNA synthetase family. In terms of assembly, homodimer. The cofactor is Mg(2+).

It is found in the cytoplasm. The enzyme catalyses tRNA(Lys) + L-lysine + ATP = L-lysyl-tRNA(Lys) + AMP + diphosphate. This chain is Lysine--tRNA ligase, found in Actinobacillus pleuropneumoniae serotype 5b (strain L20).